We begin with the raw amino-acid sequence, 115 residues long: Large ribosomal subunit protein uL22 (115 aa).

The protein belongs to the universal ribosomal protein uL22 family. As to quaternary structure, part of the 50S ribosomal subunit.

Functionally, this protein binds specifically to 23S rRNA; its binding is stimulated by other ribosomal proteins, e.g. L4, L17, and L20. It is important during the early stages of 50S assembly. It makes multiple contacts with different domains of the 23S rRNA in the assembled 50S subunit and ribosome. The globular domain of the protein is located near the polypeptide exit tunnel on the outside of the subunit, while an extended beta-hairpin is found that lines the wall of the exit tunnel in the center of the 70S ribosome. The chain is Large ribosomal subunit protein uL22 from Coxiella burnetii (strain CbuG_Q212) (Coxiella burnetii (strain Q212)).